Here is a 431-residue protein sequence, read N- to C-terminus: Adenylosuccinate lyase (431 aa).

Residues R4–Y5, R67–D69, and T93–S94 contribute to the N(6)-(1,2-dicarboxyethyl)-AMP site. H141 (proton donor/acceptor) is an active-site residue. Residue Q212 participates in N(6)-(1,2-dicarboxyethyl)-AMP binding. Catalysis depends on S262, which acts as the Proton donor/acceptor. Residues S263, K268 to N270, and S307 to V311 contribute to the N(6)-(1,2-dicarboxyethyl)-AMP site.

The protein belongs to the lyase 1 family. Adenylosuccinate lyase subfamily. As to quaternary structure, homooligomer. Residues from neighboring subunits contribute catalytic and substrate-binding residues to each active site.

It carries out the reaction N(6)-(1,2-dicarboxyethyl)-AMP = fumarate + AMP. The catalysed reaction is (2S)-2-[5-amino-1-(5-phospho-beta-D-ribosyl)imidazole-4-carboxamido]succinate = 5-amino-1-(5-phospho-beta-D-ribosyl)imidazole-4-carboxamide + fumarate. It functions in the pathway purine metabolism; AMP biosynthesis via de novo pathway; AMP from IMP: step 2/2. Its pathway is purine metabolism; IMP biosynthesis via de novo pathway; 5-amino-1-(5-phospho-D-ribosyl)imidazole-4-carboxamide from 5-amino-1-(5-phospho-D-ribosyl)imidazole-4-carboxylate: step 2/2. Catalyzes two reactions in de novo purine nucleotide biosynthesis. Catalyzes the breakdown of 5-aminoimidazole- (N-succinylocarboxamide) ribotide (SAICAR or 2-[5-amino-1-(5-phospho-beta-D-ribosyl)imidazole-4-carboxamido]succinate) to 5-aminoimidazole-4-carboxamide ribotide (AICAR or 5-amino-1-(5-phospho-beta-D-ribosyl)imidazole-4-carboxamide) and fumarate, and of adenylosuccinate (ADS or N(6)-(1,2-dicarboxyethyl)-AMP) to adenosine monophosphate (AMP) and fumarate. The chain is Adenylosuccinate lyase (purB) from Synechocystis sp. (strain ATCC 27184 / PCC 6803 / Kazusa).